The primary structure comprises 163 residues: Jun dimerization protein 2 (163 aa).

2 disordered regions span residues 1 to 20 (MMPGQIPDPSVTAGSLPGLG) and 59 to 89 (KRPQPVKSELDEEEERRKRRREKNKVAAARC). A Glycyl lysine isopeptide (Lys-Gly) (interchain with G-Cter in SUMO2) cross-link involves residue K65. The 64-residue stretch at 72-135 (EERRKRRREK…QQLILMLNRH (64 aa)) folds into the bZIP domain. The tract at residues 74–96 (RRKRRREKNKVAAARCRNKKKER) is basic motif. Residues 100-128 (LQRESERLELMNAELKTQIEELKLERQQL) are leucine-zipper. Residue T148 is modified to Phosphothreonine; by MAPK8.

This sequence belongs to the bZIP family. ATF subfamily. As to quaternary structure, forms a homodimer or heterodimer with JUN, JUNB, JUND, CEBPG and ATF2 thereby inhibiting transactivation by JUN, ATF2 and CEBPG. Binds multiple DNA elements such as cAMP-response element (CRE) and TPA response element (TRE) either as homodimer or heterodimer. Interacts with IRF2BP1. Post-translationally, phosphorylation of Thr-148 by MAPK8 in response to different stress conditions such as, UV irradiation, oxidatives stress and anisomycin treatments. In terms of processing, polyubiquitinated; probably by IRF2BP1. In terms of tissue distribution, ubiquitously expressed in all adult tissues tested as well in embryos.

Its subcellular location is the nucleus. In terms of biological role, component of the AP-1 transcription factor that represses transactivation mediated by the Jun family of proteins. Involved in a variety of transcriptional responses associated with AP-1, such as UV-induced apoptosis, cell differentiation, tumorigenesis and antitumogeneris. Can also function as a repressor by recruiting histone deacetylase 3/HDAC3 to the promoter region of JUN. May control transcription via direct regulation of the modification of histones and the assembly of chromatin. The polypeptide is Jun dimerization protein 2 (Jdp2) (Mus musculus (Mouse)).